A 750-amino-acid chain; its full sequence is Photosystem I P700 chlorophyll a apoprotein A1 (750 aa).

The next 8 helical transmembrane spans lie at 72–95, 158–181, 197–221, 293–311, 348–371, 387–413, 435–457, and 532–550; these read VFSA…FHGA, LYST…FHYH, LNHH…HVSL, TAHH…GHMY, WHAQ…HHMY, LSIF…IFMV, AIIS…LYIH, and FLVH…LILL. Cysteine 574 and cysteine 583 together coordinate [4Fe-4S] cluster. The next 2 membrane-spanning stretches (helical) occupy residues 590-611 and 664-686; these read HVFL…HFSW and LSAY…MFLF. Position 675 (histidine 675) interacts with chlorophyll a'. Chlorophyll a-binding residues include methionine 683 and tyrosine 691. Phylloquinone is bound at residue tryptophan 692. The helical transmembrane segment at 724-744 threads the bilayer; it reads AVGVAHYLLGGIATTWAFFLA.

This sequence belongs to the PsaA/PsaB family. As to quaternary structure, the PsaA/B heterodimer binds the P700 chlorophyll special pair and subsequent electron acceptors. PSI consists of a core antenna complex that captures photons, and an electron transfer chain that converts photonic excitation into a charge separation. The eukaryotic PSI reaction center is composed of at least 11 subunits. Requires P700 is a chlorophyll a/chlorophyll a' dimer, A0 is one or more chlorophyll a, A1 is one or both phylloquinones and FX is a shared 4Fe-4S iron-sulfur center. as cofactor.

It localises to the plastid. The protein resides in the chloroplast thylakoid membrane. The enzyme catalyses reduced [plastocyanin] + hnu + oxidized [2Fe-2S]-[ferredoxin] = oxidized [plastocyanin] + reduced [2Fe-2S]-[ferredoxin]. In terms of biological role, psaA and PsaB bind P700, the primary electron donor of photosystem I (PSI), as well as the electron acceptors A0, A1 and FX. PSI is a plastocyanin-ferredoxin oxidoreductase, converting photonic excitation into a charge separation, which transfers an electron from the donor P700 chlorophyll pair to the spectroscopically characterized acceptors A0, A1, FX, FA and FB in turn. Oxidized P700 is reduced on the lumenal side of the thylakoid membrane by plastocyanin. This Chlorokybus atmophyticus (Soil alga) protein is Photosystem I P700 chlorophyll a apoprotein A1.